The following is a 209-amino-acid chain: COP9 signalosome complex subunit 8 (209 aa).

One can recognise a PCI domain in the interval 8–179 (DNAFSFRKLL…GALDVSLNRF (172 aa)). Residue S175 is modified to Phosphoserine.

Belongs to the CSN8 family. Component of the CSN complex, composed of COPS1/GPS1, COPS2, COPS3, COPS4, COPS5, COPS6, COPS7 (COPS7A or COPS7B), COPS8 and COPS9. In the complex, it probably interacts directly with COPS3, COPS4 and COPS7 (COPS7A or COPS7B).

It is found in the cytoplasm. The protein resides in the nucleus. In terms of biological role, component of the COP9 signalosome complex (CSN), a complex involved in various cellular and developmental processes. The CSN complex is an essential regulator of the ubiquitin (Ubl) conjugation pathway by mediating the deneddylation of the cullin subunits of SCF-type E3 ligase complexes, leading to decrease the Ubl ligase activity of SCF-type complexes such as SCF, CSA or DDB2. The complex is also involved in phosphorylation of p53/TP53, c-jun/JUN, IkappaBalpha/NFKBIA, ITPK1 and IRF8/ICSBP, possibly via its association with CK2 and PKD kinases. CSN-dependent phosphorylation of TP53 and JUN promotes and protects degradation by the Ubl system, respectively. This is COP9 signalosome complex subunit 8 (Cops8) from Rattus norvegicus (Rat).